We begin with the raw amino-acid sequence, 264 residues long: Thymidylate synthase (264 aa).

DUMP is bound by residues Arg21 and 126–127 (RR). Residue Cys146 is the Nucleophile of the active site. DUMP-binding positions include 166–169 (RSAD), Asn177, and 207–209 (HLY). Residue Asp169 coordinates (6R)-5,10-methylene-5,6,7,8-tetrahydrofolate. Ala263 contributes to the (6R)-5,10-methylene-5,6,7,8-tetrahydrofolate binding site.

This sequence belongs to the thymidylate synthase family. Bacterial-type ThyA subfamily. As to quaternary structure, homodimer.

It localises to the cytoplasm. It carries out the reaction dUMP + (6R)-5,10-methylene-5,6,7,8-tetrahydrofolate = 7,8-dihydrofolate + dTMP. The protein operates within pyrimidine metabolism; dTTP biosynthesis. Functionally, catalyzes the reductive methylation of 2'-deoxyuridine-5'-monophosphate (dUMP) to 2'-deoxythymidine-5'-monophosphate (dTMP) while utilizing 5,10-methylenetetrahydrofolate (mTHF) as the methyl donor and reductant in the reaction, yielding dihydrofolate (DHF) as a by-product. This enzymatic reaction provides an intracellular de novo source of dTMP, an essential precursor for DNA biosynthesis. The chain is Thymidylate synthase from Rhodopseudomonas palustris (strain ATCC BAA-98 / CGA009).